The chain runs to 100 residues: MITKEEVKKITKLARLKFEEDKVEEFSSRLSSIMDMINILNEIDCTDVKPLTSVCDMQARMRPDEVTSKDHSNELFDNVQGASQQLAKEVKYFITPKVVE.

The protein belongs to the GatC family. In terms of assembly, heterotrimer of A, B and C subunits.

The catalysed reaction is L-glutamyl-tRNA(Gln) + L-glutamine + ATP + H2O = L-glutaminyl-tRNA(Gln) + L-glutamate + ADP + phosphate + H(+). The enzyme catalyses L-aspartyl-tRNA(Asn) + L-glutamine + ATP + H2O = L-asparaginyl-tRNA(Asn) + L-glutamate + ADP + phosphate + 2 H(+). In terms of biological role, allows the formation of correctly charged Asn-tRNA(Asn) or Gln-tRNA(Gln) through the transamidation of misacylated Asp-tRNA(Asn) or Glu-tRNA(Gln) in organisms which lack either or both of asparaginyl-tRNA or glutaminyl-tRNA synthetases. The reaction takes place in the presence of glutamine and ATP through an activated phospho-Asp-tRNA(Asn) or phospho-Glu-tRNA(Gln). This chain is Aspartyl/glutamyl-tRNA(Asn/Gln) amidotransferase subunit C, found in Rickettsia bellii (strain OSU 85-389).